Reading from the N-terminus, the 33-residue chain is Cytochrome b6-f complex subunit 6 (33 aa).

Residues 4–24 (ITIISYFGLLLASIIFTLVLF) form a helical membrane-spanning segment.

Belongs to the PetL family. As to quaternary structure, the 4 large subunits of the cytochrome b6-f complex are cytochrome b6, subunit IV (17 kDa polypeptide, PetD), cytochrome f and the Rieske protein, while the 4 small subunits are PetG, PetL, PetM and PetN. The complex functions as a dimer.

The protein localises to the plastid. It localises to the chloroplast thylakoid membrane. Functionally, component of the cytochrome b6-f complex, which mediates electron transfer between photosystem II (PSII) and photosystem I (PSI), cyclic electron flow around PSI, and state transitions. PetL is important for photoautotrophic growth as well as for electron transfer efficiency and stability of the cytochrome b6-f complex. The protein is Cytochrome b6-f complex subunit 6 of Pinus mugo (Dwarf mountain pine).